We begin with the raw amino-acid sequence, 338 residues long: Probable O-antigen biosynthesis glycosyltransferase WbiN (338 aa).

It belongs to the glycosyltransferase group 1 family. Glycosyltransferase 4 subfamily.

It carries out the reaction N-acetyl-alpha-D-galactosaminyl-di-trans,octa-cis-undecaprenyl diphosphate + UDP-N-acetyl-alpha-D-galactosamine = alpha-D-GalNAc-(1-&gt;3)-alpha-D-GalNAc-di-trans,octa-cis-undecaprenyl diphosphate + UDP + H(+). It participates in bacterial outer membrane biogenesis; LPS O-antigen biosynthesis. Functionally, involved in the assembly of the O-repeating unit during O-antigen biosynthesis. The protein is Probable O-antigen biosynthesis glycosyltransferase WbiN of Escherichia coli.